Reading from the N-terminus, the 258-residue chain is Tryptophan synthase alpha chain (258 aa).

Catalysis depends on proton acceptor residues glutamate 47 and aspartate 58.

Belongs to the TrpA family. Tetramer of two alpha and two beta chains.

It catalyses the reaction (1S,2R)-1-C-(indol-3-yl)glycerol 3-phosphate + L-serine = D-glyceraldehyde 3-phosphate + L-tryptophan + H2O. It functions in the pathway amino-acid biosynthesis; L-tryptophan biosynthesis; L-tryptophan from chorismate: step 5/5. In terms of biological role, the alpha subunit is responsible for the aldol cleavage of indoleglycerol phosphate to indole and glyceraldehyde 3-phosphate. In Bacillus cereus (strain ATCC 14579 / DSM 31 / CCUG 7414 / JCM 2152 / NBRC 15305 / NCIMB 9373 / NCTC 2599 / NRRL B-3711), this protein is Tryptophan synthase alpha chain.